A 459-amino-acid polypeptide reads, in one-letter code: Cysteine--tRNA ligase (459 aa).

Cys28 serves as a coordination point for Zn(2+). The short motif at 30–40 is the 'HIGH' region element; sequence ITIYDLCHIGH. Residues Cys209, His234, and Glu238 each contribute to the Zn(2+) site. Residues 266–270 carry the 'KMSKS' region motif; sequence KMSKS. Lys269 contacts ATP.

Belongs to the class-I aminoacyl-tRNA synthetase family. In terms of assembly, monomer. It depends on Zn(2+) as a cofactor.

It localises to the cytoplasm. It carries out the reaction tRNA(Cys) + L-cysteine + ATP = L-cysteinyl-tRNA(Cys) + AMP + diphosphate. The protein is Cysteine--tRNA ligase of Shewanella woodyi (strain ATCC 51908 / MS32).